We begin with the raw amino-acid sequence, 268 residues long: Probable RNA methyltransferase C2A9.10 (268 aa).

Residues Asp-23–Gly-258 form the Bin3-type SAM domain.

It belongs to the methyltransferase superfamily.

Its function is as follows. Probable RNA methyltransferase. The protein is Probable RNA methyltransferase C2A9.10 of Schizosaccharomyces pombe (strain 972 / ATCC 24843) (Fission yeast).